The chain runs to 418 residues: Serine protease inhibitor A3M (418 aa).

A signal peptide spans 1-20; the sequence is MAFIAALGILMAGICPTVLC. 3 N-linked (GlcNAc...) asparagine glycosylation sites follow: Asn-104, Asn-184, and Asn-269. The RCL stretch occupies residues 367 to 392; it reads GTEAAAATGFIFGFRSRRLQTMTVQF.

This sequence belongs to the serpin family. Expressed in liver and testis.

Its subcellular location is the secreted. The chain is Serine protease inhibitor A3M (Serpina3m) from Mus musculus (Mouse).